We begin with the raw amino-acid sequence, 641 residues long: Tetracycline resistance protein TetQ (641 aa).

Residues 1–244 (MNIINLGILA…AITSFILPPA (244 aa)) form the tr-type G domain. GTP-binding positions include 10 to 17 (AHIDAGKT), 74 to 78 (DTPGH), and 128 to 131 (NKID).

It belongs to the TRAFAC class translation factor GTPase superfamily. Classic translation factor GTPase family. TetM/TetO subfamily.

Its function is as follows. Abolishes the inhibitory effect of tetracyclin on protein synthesis by a non-covalent modification of the ribosomes. This Xylanibacter ruminicola (Prevotella ruminicola) protein is Tetracycline resistance protein TetQ (tetQ).